Reading from the N-terminus, the 666-residue chain is DNA mismatch repair protein MutL (666 aa).

Belongs to the DNA mismatch repair MutL/HexB family.

In terms of biological role, this protein is involved in the repair of mismatches in DNA. It is required for dam-dependent methyl-directed DNA mismatch repair. May act as a 'molecular matchmaker', a protein that promotes the formation of a stable complex between two or more DNA-binding proteins in an ATP-dependent manner without itself being part of a final effector complex. This chain is DNA mismatch repair protein MutL, found in Clostridium botulinum (strain 657 / Type Ba4).